Reading from the N-terminus, the 673-residue chain is UvrABC system protein B (673 aa).

The region spanning 26-183 (EGLEDGLAHQ…RRLAELQYTR (158 aa)) is the Helicase ATP-binding domain. ATP is bound at residue 39–46 (GVTGSGKT). The Beta-hairpin signature appears at 92-115 (YYDYYQPEAYVPSSDTFIEKDASV). One can recognise a Helicase C-terminal domain in the interval 431–597 (QVDDLLSEIR…GLNKKVVDIL (167 aa)). The 36-residue stretch at 633–668 (QQKIHELEGQMMQHAQNLEFEEAAQIRDQLHQLREL) folds into the UVR domain.

Belongs to the UvrB family. Forms a heterotetramer with UvrA during the search for lesions. Interacts with UvrC in an incision complex.

It is found in the cytoplasm. Its function is as follows. The UvrABC repair system catalyzes the recognition and processing of DNA lesions. A damage recognition complex composed of 2 UvrA and 2 UvrB subunits scans DNA for abnormalities. Upon binding of the UvrA(2)B(2) complex to a putative damaged site, the DNA wraps around one UvrB monomer. DNA wrap is dependent on ATP binding by UvrB and probably causes local melting of the DNA helix, facilitating insertion of UvrB beta-hairpin between the DNA strands. Then UvrB probes one DNA strand for the presence of a lesion. If a lesion is found the UvrA subunits dissociate and the UvrB-DNA preincision complex is formed. This complex is subsequently bound by UvrC and the second UvrB is released. If no lesion is found, the DNA wraps around the other UvrB subunit that will check the other stand for damage. The sequence is that of UvrABC system protein B from Klebsiella pneumoniae (strain 342).